The sequence spans 74 residues: Delta-stichotoxin-Sgt2a (74 aa).

A signal peptide spans 1 to 19; that stretch reads MNRLIILVFAAVFLTLASA. A propeptide spanning residues 20-28 is cleaved from the precursor; the sequence is EVSEDVNMA. Cystine bridges form between cysteine 34/cysteine 71, cysteine 36/cysteine 64, and cysteine 57/cysteine 72.

It belongs to the sea anemone sodium channel inhibitory toxin family. Type I subfamily.

The protein resides in the secreted. It is found in the nematocyst. In terms of biological role, binds specifically to voltage-gated sodium channels (Nav), thereby delaying their inactivation during signal transduction. The sequence is that of Delta-stichotoxin-Sgt2a from Stichodactyla gigantea (Giant carpet anemone).